Here is a 489-residue protein sequence, read N- to C-terminus: Endoglucanase 4 (489 aa).

The first 25 residues, 1–25 (MAGKSFMTPAIMLAMLLLISPETYA), serve as a signal peptide directing secretion. Asp-81 functions as the Nucleophile in the catalytic mechanism. His-409 is a catalytic residue. Residue Asn-453 is glycosylated (N-linked (GlcNAc...) asparagine). Active-site residues include Asp-460 and Glu-469.

This sequence belongs to the glycosyl hydrolase 9 (cellulase E) family.

Its subcellular location is the secreted. It carries out the reaction Endohydrolysis of (1-&gt;4)-beta-D-glucosidic linkages in cellulose, lichenin and cereal beta-D-glucans.. This chain is Endoglucanase 4, found in Arabidopsis thaliana (Mouse-ear cress).